Consider the following 574-residue polypeptide: Arginine--tRNA ligase (574 aa).

A 'HIGH' region motif is present at residues 126–136 (PNIAKRMHVGH).

This sequence belongs to the class-I aminoacyl-tRNA synthetase family. Monomer.

Its subcellular location is the cytoplasm. The enzyme catalyses tRNA(Arg) + L-arginine + ATP = L-arginyl-tRNA(Arg) + AMP + diphosphate. The polypeptide is Arginine--tRNA ligase (Chloroflexus aurantiacus (strain ATCC 29366 / DSM 635 / J-10-fl)).